The following is a 262-amino-acid chain: Thiazole synthase (262 aa).

Lys96 functions as the Schiff-base intermediate with DXP in the catalytic mechanism. 1-deoxy-D-xylulose 5-phosphate is bound by residues Gly157, 184-185 (AG), and 206-207 (NT).

This sequence belongs to the ThiG family. Homotetramer. Forms heterodimers with either ThiH or ThiS.

The protein resides in the cytoplasm. It carries out the reaction [ThiS sulfur-carrier protein]-C-terminal-Gly-aminoethanethioate + 2-iminoacetate + 1-deoxy-D-xylulose 5-phosphate = [ThiS sulfur-carrier protein]-C-terminal Gly-Gly + 2-[(2R,5Z)-2-carboxy-4-methylthiazol-5(2H)-ylidene]ethyl phosphate + 2 H2O + H(+). The protein operates within cofactor biosynthesis; thiamine diphosphate biosynthesis. Functionally, catalyzes the rearrangement of 1-deoxy-D-xylulose 5-phosphate (DXP) to produce the thiazole phosphate moiety of thiamine. Sulfur is provided by the thiocarboxylate moiety of the carrier protein ThiS. In vitro, sulfur can be provided by H(2)S. This Legionella pneumophila (strain Corby) protein is Thiazole synthase.